A 473-amino-acid polypeptide reads, in one-letter code: Bifunctional protein HldE (473 aa).

The tract at residues 1-318 (MKLSMPRFDQ…RAIQREEGSE (318 aa)) is ribokinase. Position 194–197 (194–197 (NLSE)) interacts with ATP. The active site involves Asp263. Residues 343–473 (FTNGCFDILH…TAIVEKIRKN (131 aa)) are cytidylyltransferase.

In the N-terminal section; belongs to the carbohydrate kinase PfkB family. The protein in the C-terminal section; belongs to the cytidylyltransferase family. In terms of assembly, homodimer.

The enzyme catalyses D-glycero-beta-D-manno-heptose 7-phosphate + ATP = D-glycero-beta-D-manno-heptose 1,7-bisphosphate + ADP + H(+). It catalyses the reaction D-glycero-beta-D-manno-heptose 1-phosphate + ATP + H(+) = ADP-D-glycero-beta-D-manno-heptose + diphosphate. It functions in the pathway nucleotide-sugar biosynthesis; ADP-L-glycero-beta-D-manno-heptose biosynthesis; ADP-L-glycero-beta-D-manno-heptose from D-glycero-beta-D-manno-heptose 7-phosphate: step 1/4. It participates in nucleotide-sugar biosynthesis; ADP-L-glycero-beta-D-manno-heptose biosynthesis; ADP-L-glycero-beta-D-manno-heptose from D-glycero-beta-D-manno-heptose 7-phosphate: step 3/4. Its function is as follows. Catalyzes the phosphorylation of D-glycero-D-manno-heptose 7-phosphate at the C-1 position to selectively form D-glycero-beta-D-manno-heptose-1,7-bisphosphate. Catalyzes the ADP transfer from ATP to D-glycero-beta-D-manno-heptose 1-phosphate, yielding ADP-D-glycero-beta-D-manno-heptose. This Pseudomonas putida (strain ATCC 47054 / DSM 6125 / CFBP 8728 / NCIMB 11950 / KT2440) protein is Bifunctional protein HldE.